The sequence spans 119 residues: NADH-quinone oxidoreductase subunit 7 (119 aa).

3 helical membrane-spanning segments follow: residues 11-31 (LIYV…GALL), 59-79 (VHFY…AFLW), and 88-108 (LGLY…VGFL).

Belongs to the complex I subunit 3 family. As to quaternary structure, NDH-1 is composed of 15 different subunits, Nqo1 to Nqo15. The complex has a L-shaped structure, with the hydrophobic arm (subunits Nqo7, Nqo8 and Nqo10 to Nqo14) embedded in the membrane and the hydrophilic peripheral arm (subunits Nqo1 to Nqo6, Nqo9 and Nqo15) protruding into the bacterial cytoplasm. The hydrophilic domain contains all the redox centers.

Its subcellular location is the cell inner membrane. It carries out the reaction a quinone + NADH + 5 H(+)(in) = a quinol + NAD(+) + 4 H(+)(out). Its function is as follows. NDH-1 shuttles electrons from NADH, via FMN and iron-sulfur (Fe-S) centers, to quinones in the respiratory chain. The immediate electron acceptor for the enzyme in this species is menaquinone. Couples the redox reaction to proton translocation (for every two electrons transferred, four hydrogen ions are translocated across the cytoplasmic membrane), and thus conserves the redox energy in a proton gradient required for the synthesis of ATP. In Thermus thermophilus (strain ATCC 27634 / DSM 579 / HB8), this protein is NADH-quinone oxidoreductase subunit 7 (nqo7).